Reading from the N-terminus, the 468-residue chain is Intramembrane protease 2 (468 aa).

The Lumenal portion of the chain corresponds to 1-22 (MAEAATEIPPTASNVTVFTFEE). Residue N14 is glycosylated (N-linked (GlcNAc...) asparagine). The chain crosses the membrane as a helical span at residues 23–43 (QATSSLALYGMSILCIIIGSI). Residues 44 to 70 (RSAQYIRTNIDKKRLIEGSITMREARK) lie on the Cytoplasmic side of the membrane. Residues 71–91 (FPISASLVLFGLYLFFKPAAE) traverse the membrane as a helical segment. Over 92–168 (RFLWVARVFQ…TNLPTIQKAE (77 aa)) the chain is Lumenal. Residues N114 and N123 are each glycosylated (N-linked (GlcNAc...) asparagine). A helical transmembrane segment spans residues 169-189 (CMQLLTFLICFEGVNAFASLL). Residues 190 to 247 (KPFVTAFLKKMPLVPSFLRFNAPYLFSLKKGNKEMEEGDIEDAKKKETEYLFKIDFDR) lie on the Cytoplasmic side of the membrane. Residues 248-265 (YDIIALLMCSPILISHLL) form a helical membrane-spanning segment. Over 266–267 (KR) the chain is Lumenal. Residues 268-284 (HWITNNIIGVSFSILGI) form a helical membrane-spanning segment. The Cytoplasmic portion of the chain corresponds to 285–296 (ERLHLASFKAGS). The helical transmembrane segment at 297–317 (LLLVGLFFYDIFWVFGTDVMT) threads the bilayer. The active site involves D306. Residues 318–343 (SVAKGIDAPILLQFPQDIYRNGIMEA) are Lumenal-facing. A helical membrane pass occupies residues 344–364 (SKHSMLGLGDIVIPGIFIALL). The active site involves D353. At 365–388 (RRFDYRVVQTTAESKAPQGSLKGR) the chain is on the cytoplasmic side. The chain crosses the membrane as a helical span at residues 389 to 409 (YYFVVTVVAYMAGLFITMAVM). The Lumenal segment spans residues 410–415 (HHFKAA). The chain crosses the membrane as a helical span at residues 416–436 (QPALLYLVPCCLFVPLLLAVI). The short motif at 417–419 (PAL) is the PAL element. Residues 437 to 468 (RGELSALWNYDESRHVDNEENRKKVDSGKKNN) are Cytoplasmic-facing.

The protein belongs to the peptidase A22B family.

The protein localises to the membrane. It localises to the endoplasmic reticulum membrane. Acts as intramembrane protease. In larvae, required for the complete shedding of the cuticle during molting, possibly by regulating cholesterol uptake via lrp-1. Involved in embryonic and larval development. This Caenorhabditis elegans protein is Intramembrane protease 2.